We begin with the raw amino-acid sequence, 368 residues long: Alanine racemase (368 aa).

The Proton acceptor; specific for D-alanine role is filled by lysine 40. Position 40 is an N6-(pyridoxal phosphate)lysine (lysine 40). Arginine 134 lines the substrate pocket. Tyrosine 263 serves as the catalytic Proton acceptor; specific for L-alanine. Methionine 310 is a substrate binding site.

This sequence belongs to the alanine racemase family. Requires pyridoxal 5'-phosphate as cofactor.

The enzyme catalyses L-alanine = D-alanine. The protein operates within amino-acid biosynthesis; D-alanine biosynthesis; D-alanine from L-alanine: step 1/1. Catalyzes the interconversion of L-alanine and D-alanine. May also act on other amino acids. The polypeptide is Alanine racemase (alr) (Listeria monocytogenes serotype 4b (strain CLIP80459)).